Consider the following 187-residue polypeptide: Peptide deformylase (187 aa).

Residues C107 and H149 each coordinate Fe cation. E150 is a catalytic residue. Fe cation is bound at residue H153.

This sequence belongs to the polypeptide deformylase family. Fe(2+) is required as a cofactor.

It carries out the reaction N-terminal N-formyl-L-methionyl-[peptide] + H2O = N-terminal L-methionyl-[peptide] + formate. Its function is as follows. Removes the formyl group from the N-terminal Met of newly synthesized proteins. Requires at least a dipeptide for an efficient rate of reaction. N-terminal L-methionine is a prerequisite for activity but the enzyme has broad specificity at other positions. This Picosynechococcus sp. (strain ATCC 27264 / PCC 7002 / PR-6) (Agmenellum quadruplicatum) protein is Peptide deformylase.